Consider the following 403-residue polypeptide: MSKFNRMHLIVLDSVGIGAAPDANNFVNAGVPDGASDTLGHISKTVGLNVPNMAKLGLGNIPREQPLKTVPAESNPTGYATKLEEVSLGKDTMTGHWEIMGLNITEPFDTFWNGFPEEILTQIEEFSGRKVIREANKPYSGTAVIDDFGPRQMETGELIIYTSADPVLQIAAHEDIIPVEELYRICEFARSITLERPALLGRIIARPYVGEPGNFTRTSNRRDLAISPFAPTVLDKLNEAGIDTYSVGKISDIFNGEGINHDMGHNKSNNHGVDNLIKAMTSEDFKHGFSFTNLVDFDALYGHRRNPQGYRDCLHEFDERLPEIIAAMKEDDLLMITADHGNDPTYAGTDHTREYIPFLAYSPSFKCSGLIPVGHFADISATIADNFGVEKAMIGESFLDKLV.

Mn(2+) contacts are provided by D13, D298, H303, D339, H340, and H351.

This sequence belongs to the phosphopentomutase family. The cofactor is Mn(2+).

It is found in the cytoplasm. The catalysed reaction is 2-deoxy-alpha-D-ribose 1-phosphate = 2-deoxy-D-ribose 5-phosphate. It catalyses the reaction alpha-D-ribose 1-phosphate = D-ribose 5-phosphate. It participates in carbohydrate degradation; 2-deoxy-D-ribose 1-phosphate degradation; D-glyceraldehyde 3-phosphate and acetaldehyde from 2-deoxy-alpha-D-ribose 1-phosphate: step 1/2. In terms of biological role, isomerase that catalyzes the conversion of deoxy-ribose 1-phosphate (dRib-1-P) and ribose 1-phosphate (Rib-1-P) to deoxy-ribose 5-phosphate (dRib-5-P) and ribose 5-phosphate (Rib-5-P), respectively. This chain is Phosphopentomutase, found in Streptococcus thermophilus (strain ATCC BAA-250 / LMG 18311).